The chain runs to 1577 residues: Pentafunctional AROM polypeptide (1577 aa).

The segment at 1-384 (MSMKMADPTK…YEPKASVVSN (384 aa)) is 3-dehydroquinate synthase. NAD(+) contacts are provided by residues 48 to 50 (DTN), 85 to 88 (ENSK), 116 to 118 (GGV), and Asp-121. Arg-132 is a binding site for 7-phospho-2-dehydro-3-deoxy-D-arabino-heptonate. Position 141–142 (141–142 (TT)) interacts with NAD(+). 7-phospho-2-dehydro-3-deoxy-D-arabino-heptonate-binding residues include Asp-148 and Lys-154. Residue Lys-163 coordinates NAD(+). Residue Asn-164 participates in 7-phospho-2-dehydro-3-deoxy-D-arabino-heptonate binding. Residues 181–184 (FIDT) and Asn-192 each bind NAD(+). Residue Glu-196 coordinates Zn(2+). Residues 196–199 (EVIK) and Lys-250 each bind 7-phospho-2-dehydro-3-deoxy-D-arabino-heptonate. Glu-260 serves as the catalytic Proton acceptor; for 3-dehydroquinate synthase activity. 7-phospho-2-dehydro-3-deoxy-D-arabino-heptonate contacts are provided by residues 264 to 268 (RNLLN) and His-271. His-271 contacts Zn(2+). The Proton acceptor; for 3-dehydroquinate synthase activity role is filled by His-275. 7-phospho-2-dehydro-3-deoxy-D-arabino-heptonate is bound by residues His-287 and Lys-356. Zn(2+) is bound at residue His-287. The tract at residues 397 to 842 (VIPGVPKSLN…WDALKQKFGV (446 aa)) is EPSP synthase. The active-site For EPSP synthase activity is the Cys-824. The interval 864–1056 (NASVIIIGMR…RKKRLSFFVS (193 aa)) is shikimate kinase. Position 871–878 (871–878 (GMRGAGKT)) interacts with ATP. The segment at 1057–1277 (LTLPDLRDTG…AAPGQLSAAE (221 aa)) is 3-dehydroquinase. His-1180 acts as the Proton acceptor; for 3-dehydroquinate dehydratase activity in catalysis. The active-site Schiff-base intermediate with substrate; for 3-dehydroquinate dehydratase activity is Lys-1208. The tract at residues 1290-1577 (AKKFAIFGKP…RNAVLGTNEK (288 aa)) is shikimate dehydrogenase.

The protein in the N-terminal section; belongs to the sugar phosphate cyclases superfamily. Dehydroquinate synthase family. This sequence in the 2nd section; belongs to the EPSP synthase family. In the 3rd section; belongs to the shikimate kinase family. It in the 4th section; belongs to the type-I 3-dehydroquinase family. The protein in the C-terminal section; belongs to the shikimate dehydrogenase family. In terms of assembly, homodimer. It depends on Zn(2+) as a cofactor.

It is found in the cytoplasm. It carries out the reaction 7-phospho-2-dehydro-3-deoxy-D-arabino-heptonate = 3-dehydroquinate + phosphate. It catalyses the reaction 3-dehydroquinate = 3-dehydroshikimate + H2O. The catalysed reaction is shikimate + NADP(+) = 3-dehydroshikimate + NADPH + H(+). The enzyme catalyses shikimate + ATP = 3-phosphoshikimate + ADP + H(+). It carries out the reaction 3-phosphoshikimate + phosphoenolpyruvate = 5-O-(1-carboxyvinyl)-3-phosphoshikimate + phosphate. The protein operates within metabolic intermediate biosynthesis; chorismate biosynthesis; chorismate from D-erythrose 4-phosphate and phosphoenolpyruvate: step 2/7. Its pathway is metabolic intermediate biosynthesis; chorismate biosynthesis; chorismate from D-erythrose 4-phosphate and phosphoenolpyruvate: step 3/7. It functions in the pathway metabolic intermediate biosynthesis; chorismate biosynthesis; chorismate from D-erythrose 4-phosphate and phosphoenolpyruvate: step 4/7. It participates in metabolic intermediate biosynthesis; chorismate biosynthesis; chorismate from D-erythrose 4-phosphate and phosphoenolpyruvate: step 5/7. The protein operates within metabolic intermediate biosynthesis; chorismate biosynthesis; chorismate from D-erythrose 4-phosphate and phosphoenolpyruvate: step 6/7. Functionally, the AROM polypeptide catalyzes 5 consecutive enzymatic reactions in prechorismate polyaromatic amino acid biosynthesis. The chain is Pentafunctional AROM polypeptide from Talaromyces stipitatus (strain ATCC 10500 / CBS 375.48 / QM 6759 / NRRL 1006) (Penicillium stipitatum).